The following is a 332-amino-acid chain: Putative threonine dehydratase (332 aa).

Lys-56 carries the N6-(pyridoxal phosphate)lysine modification.

It belongs to the serine/threonine dehydratase family. Pyridoxal 5'-phosphate serves as cofactor.

It catalyses the reaction L-threonine = 2-oxobutanoate + NH4(+). Its pathway is amino-acid biosynthesis; L-isoleucine biosynthesis; 2-oxobutanoate from L-threonine: step 1/1. The chain is Putative threonine dehydratase from Sinorhizobium fredii (strain NBRC 101917 / NGR234).